A 1445-amino-acid polypeptide reads, in one-letter code: CD109 antigen (1445 aa).

Residues 1 to 21 (MQGPPLLTAAHLLCVCTAALA) form the signal peptide. 8 N-linked (GlcNAc...) asparagine glycosylation sites follow: Asn68, Asn118, Asn247, Asn279, Asn365, Asn419, Asn513, and Asn645. The interval 593–702 (DKSVNLMNAS…TWIWLDTNMG (110 aa)) is bait region (approximate). Positions 921–924 (CGEQ) form a cross-link, isoglutamyl cysteine thioester (Cys-Gln). N-linked (GlcNAc...) asparagine glycosylation is found at Asn1086 and Asn1355. Residue Ala1420 is the site of GPI-anchor amidated alanine attachment. A propeptide spans 1421 to 1445 (SGSHHHSSVIFIFCFKLLYFMELWL) (removed in mature form).

This sequence belongs to the protease inhibitor I39 (alpha-2-macroglobulin) family. As to quaternary structure, heterodimer; disulfide-linked. Interacts with TGFB1 and TGFBR1. Forms a heteromeric complex with TGFBR1, TGFBR2 and TGFBR3 in a ligand-independent manner. N-glycosylated. In terms of processing, 2 forms of 150 (p150) and 120 kDa (p120) exist due to proteolytic degradation from a 180 kDa form. Widely expressed with high level in uterus, aorta, heart, lung, trachea, placenta and in fetal heart, kidney, liver, spleen and lung. Expressed by CD34(+) acute myeloid leukemia cell lines, T-cell lines, activated T-lymphoblasts, endothelial cells and activated platelets. Isoform 4 is expressed in placenta. Isoform 1 is expressed in keratinocytes and placenta.

It is found in the cell membrane. Modulates negatively TGFB1 signaling in keratinocytes. This chain is CD109 antigen (CD109), found in Homo sapiens (Human).